The chain runs to 145 residues: Alpha-amylase/trypsin inhibitor CM2 (145 aa).

Residues 1-25 (MASKSSITHLLLAAVLVSVFAAAAA) form the signal peptide.

The protein belongs to the protease inhibitor I6 (cereal trypsin/alpha-amylase inhibitor) family. In terms of tissue distribution, developing endosperm.

The protein resides in the secreted. Its function is as follows. Alpha-amylase/trypsin inhibitor. It could be involved in insect defense mechanisms. The protein is Alpha-amylase/trypsin inhibitor CM2 of Triticum aestivum (Wheat).